A 257-amino-acid polypeptide reads, in one-letter code: Chlorocatechol 1,2-dioxygenase (257 aa).

Tyr-134, Tyr-169, His-194, and His-196 together coordinate Fe cation.

Belongs to the intradiol ring-cleavage dioxygenase family. Fe(3+) serves as cofactor.

The enzyme catalyses 4-chlorocatechol + O2 = 3-chloro-cis,cis-muconate + 2 H(+). It carries out the reaction 3,5-dichlorocatechol + O2 = (2E,4E)-2,4-dichloromuconate + 2 H(+). This is Chlorocatechol 1,2-dioxygenase (clcA) from Rhodococcus opacus (Nocardia opaca).